Reading from the N-terminus, the 119-residue chain is Large ribosomal subunit protein bL20 (119 aa).

This sequence belongs to the bacterial ribosomal protein bL20 family.

Functionally, binds directly to 23S ribosomal RNA and is necessary for the in vitro assembly process of the 50S ribosomal subunit. It is not involved in the protein synthesizing functions of that subunit. The polypeptide is Large ribosomal subunit protein bL20 (Granulibacter bethesdensis (strain ATCC BAA-1260 / CGDNIH1)).